The chain runs to 1069 residues: MSGQFNNSPRGEDKDVEAGTSSFTEYEDSPFDIASTKNAPVERLRRWRQAALVLNASRRFRYTLDLKREEDKKQMLRKMRAHAQAIRAAHLFKAAASRVTGIASPLPTPGGGDFGIGQEQIVSISRDQNIGALQELGGVRGLSDLLKTNLEKGIHGDDDDILKRKSAFGSNTYPQKKGRSFWRFVWEASQDLTLIILIVAAVASLALGIKTEGIEKGWYDGISIAFAVLLVIVVTATSDYRQSLQFQNLNEEKRNIRLEVTRDGRRVEISIYDIVVGDVIPLNIGDQVPADGVLVAGHSLAVDESSMTGESKIVQKNSTKHPFLMSGCKVADGNGTMLVTGVGVNTEWGLLMASVSEDNGGETPLQVRLNGVATFIGIVGLTVAGVVLFVLVVRYFTGHTKNEQGGPQFIGGKTKFEHVLDDLVEIFTVAVTIVVVAVPEGLPLAVTLTLAYSMRKMMADKALVRRLSACETMGSATTICSDKTGTLTLNEMTVVECYAGLQKMDSPDSSSKLPSAFTSILVEGIAHNTTGSVFRSESGEIQVSGSPTERAILNWAIKLGMDFDALKSESSAVQFFPFNSEKKRGGVAVKSPDSSVHIHWKGAAEIVLGSCTHYMDESESFVDMSEDKMGGLKDAIDDMAARSLRCVAIAFRTFEADKIPTDEEQLSRWELPEDDLILLAIVGIKDPCRPGVKNSVLLCQQAGVKVRMVTGDNIQTAKAIALECGILASDSDASEPNLIEGKVFRSYSEEERDRICEEISVMGRSSPNDKLLLVQSLKRRGHVVAVTGDGTNDAPALHEADIGLAMGIQGTEVAKEKSDIIILDDNFESVVKVVRWGRSVYANIQKFIQFQLTVNVAALVINVVAAISAGEVPLTAVQLLWVNLIMDTLGALALATEPPTDHLMDRAPVGRREPLITNIMWRNLFIQAMYQVTVLLILNFRGISILHLKSKPNAERVKNTVIFNAFVICQVFNEFNARKPDEINIFRGVLRNHLFVGIISITIVLQVVIVEFLGTFASTTKLDWEMWLVCIGIGSISWPLAVIGKLIPVPETPVSQYFRINRWRRNSSG.

The tract at residues 1–29 is disordered; the sequence is MSGQFNNSPRGEDKDVEAGTSSFTEYEDS. The residue at position 2 (serine 2) is an N-acetylserine. Over 2–180 the chain is Cytoplasmic; it reads SGQFNNSPRG…NTYPQKKGRS (179 aa). The interval 42-53 is interaction with calmodulin; that stretch reads ERLRRWRQAALV. The helical transmembrane segment at 181–201 threads the bilayer; the sequence is FWRFVWEASQDLTLIILIVAA. Residues 202–219 are Lumenal-facing; sequence VASLALGIKTEGIEKGWY. The chain crosses the membrane as a helical span at residues 220 to 240; the sequence is DGISIAFAVLLVIVVTATSDY. Topologically, residues 241-369 are cytoplasmic; that stretch reads RQSLQFQNLN…GGETPLQVRL (129 aa). Residues 370 to 389 form a helical membrane-spanning segment; sequence NGVATFIGIVGLTVAGVVLF. Residues 390 to 426 are Lumenal-facing; it reads VLVVRYFTGHTKNEQGGPQFIGGKTKFEHVLDDLVEI. The chain crosses the membrane as a helical span at residues 427-444; it reads FTVAVTIVVVAVPEGLPL. The Cytoplasmic portion of the chain corresponds to 445–844; it reads AVTLTLAYSM…RWGRSVYANI (400 aa). Aspartate 482 acts as the 4-aspartylphosphate intermediate in catalysis. Positions 789 and 793 each coordinate Mg(2+). A helical membrane pass occupies residues 845–863; sequence QKFIQFQLTVNVAALVINV. Over 864–874 the chain is Lumenal; the sequence is VAAISAGEVPL. Residues 875–895 form a helical membrane-spanning segment; sequence TAVQLLWVNLIMDTLGALALA. Residues 896–915 are Cytoplasmic-facing; that stretch reads TEPPTDHLMDRAPVGRREPL. Residues 916–938 traverse the membrane as a helical segment; that stretch reads ITNIMWRNLFIQAMYQVTVLLIL. The Lumenal segment spans residues 939 to 951; the sequence is NFRGISILHLKSK. The chain crosses the membrane as a helical span at residues 952 to 973; it reads PNAERVKNTVIFNAFVICQVFN. At 974 to 991 the chain is on the cytoplasmic side; the sequence is EFNARKPDEINIFRGVLR. The helical transmembrane segment at 992–1013 threads the bilayer; that stretch reads NHLFVGIISITIVLQVVIVEFL. Residues 1014-1023 are Lumenal-facing; the sequence is GTFASTTKLD. The helical transmembrane segment at 1024 to 1045 threads the bilayer; sequence WEMWLVCIGIGSISWPLAVIGK. Over 1046 to 1069 the chain is Cytoplasmic; the sequence is LIPVPETPVSQYFRINRWRRNSSG.

This sequence belongs to the cation transport ATPase (P-type) (TC 3.A.3) family. Type IIB subfamily.

The protein localises to the membrane. It catalyses the reaction Ca(2+)(in) + ATP + H2O = Ca(2+)(out) + ADP + phosphate + H(+). Its activity is regulated as follows. Activated by calmodulin. Functionally, this magnesium-dependent enzyme catalyzes the hydrolysis of ATP coupled with the translocation of calcium from the cytosol into the endoplasmic reticulum. In Arabidopsis thaliana (Mouse-ear cress), this protein is Calcium-transporting ATPase 10, plasma membrane-type (ACA10).